We begin with the raw amino-acid sequence, 369 residues long: Ribonuclease 3 (369 aa).

In terms of domain architecture, RNase III spans 6–142 (IGFVQSSINY…IIGAVAADCD (137 aa)). Glu-46 is a binding site for Mg(2+). The active site involves Asp-50. Residues Asp-128 and Glu-131 each coordinate Mg(2+). Glu-131 is a catalytic residue. A DRBM domain is found at 272 to 341 (NPASTLHELF…SLKLLKFIAK (70 aa)).

It belongs to the ribonuclease III family. As to quaternary structure, homodimer. Mg(2+) serves as cofactor.

The protein localises to the cytoplasm. It catalyses the reaction Endonucleolytic cleavage to 5'-phosphomonoester.. In terms of biological role, digests double-stranded RNA. Involved in the processing of primary rRNA transcript to yield the immediate precursors to the large and small rRNAs (23S and 16S). Processes some mRNAs, and tRNAs when they are encoded in the rRNA operon. Processes pre-crRNA and tracrRNA of type II CRISPR loci if present in the organism. This is Ribonuclease 3 (rnc) from Treponema succinifaciens (strain ATCC 33096 / DSM 2489 / 6091).